We begin with the raw amino-acid sequence, 37 residues long: Cytochrome b6-f complex subunit 5 (37 aa).

Residues 5-25 (LLFGIVLGLIPVTLTGLFVAA) form a helical membrane-spanning segment.

The protein belongs to the PetG family. In terms of assembly, the 4 large subunits of the cytochrome b6-f complex are cytochrome b6, subunit IV (17 kDa polypeptide, PetD), cytochrome f and the Rieske protein, while the 4 small subunits are PetG, PetL, PetM and PetN. The complex functions as a dimer.

The protein localises to the plastid. It is found in the chloroplast thylakoid membrane. Functionally, component of the cytochrome b6-f complex, which mediates electron transfer between photosystem II (PSII) and photosystem I (PSI), cyclic electron flow around PSI, and state transitions. PetG is required for either the stability or assembly of the cytochrome b6-f complex. In Guillardia theta (Cryptophyte), this protein is Cytochrome b6-f complex subunit 5.